The chain runs to 430 residues: Glutamate-1-semialdehyde 2,1-aminomutase 2 (430 aa).

N6-(pyridoxal phosphate)lysine is present on K269.

Belongs to the class-III pyridoxal-phosphate-dependent aminotransferase family. HemL subfamily. In terms of assembly, homodimer. The cofactor is pyridoxal 5'-phosphate.

The protein localises to the cytoplasm. The catalysed reaction is (S)-4-amino-5-oxopentanoate = 5-aminolevulinate. Its pathway is porphyrin-containing compound metabolism; protoporphyrin-IX biosynthesis; 5-aminolevulinate from L-glutamyl-tRNA(Glu): step 2/2. The sequence is that of Glutamate-1-semialdehyde 2,1-aminomutase 2 from Bacillus pumilus (strain SAFR-032).